The sequence spans 581 residues: MWGRTARRRCPRELRRGREALLVLLALLALAGLGSVLRAQRGAGAGAAEPGPPRTPRPGRREPVMPRPPVPANALGARGEAVRLQLQGEELRLQEESVRLHQINIYLSDRISLHRRLPERWNPLCKEKKYDYDNLPRTSVIIAFYNEAWSTLLRTVYSVLETSPDILLEEVILVDDYSDREHLKERLANELSGLPKVRLIRANKREGLVRARLLGASAARGDVLTFLDCHCECHEGWLEPLLQRIHEEESAVVCPVIDVIDWNTFEYLGNSGEPQIGGFDWRLVFTWHTVPERERIRMQSPVDVIRSPTMAGGLFAVSKKYFEYLGSYDTGMEVWGGENLEFSFRIWQCGGVLETHPCSHVGHVFPKQAPYSRNKALANSVRAAEVWMDEFKELYYHRNPRARLEPFGDVTERKQLRDKLQCKDFKWFLETVYPELHVPEDRPGFFGMLQNKGLTDYCFDYNPPDENQIVGHQVILYLCHGMGQNQFFEYTSQKEIRYNTHQPEGCIAVEAGMDTLIMHLCEETAPENQKFILQEDGSLFHEQSKKCVQAARKESSDSFVPLLRDCTNSDHQKWFFKERML.

The Cytoplasmic segment spans residues 1–19 (MWGRTARRRCPRELRRGRE). Residues 20–37 (ALLVLLALLALAGLGSVL) traverse the membrane as a helical; Signal-anchor for type II membrane protein segment. At 38–581 (RAQRGAGAGA…QKWFFKERML (544 aa)) the chain is on the lumenal side. A disordered region spans residues 43 to 67 (AGAGAAEPGPPRTPRPGRREPVMPR). 5 cysteine pairs are disulfide-bonded: cysteine 125-cysteine 358, cysteine 349-cysteine 422, cysteine 458-cysteine 479, cysteine 506-cysteine 521, and cysteine 547-cysteine 566. Residues 135–244 (LPRTSVIIAF…EGWLEPLLQR (110 aa)) are catalytic subdomain A. The substrate site is built by aspartate 176 and arginine 205. Residues aspartate 228 and histidine 230 each coordinate Mn(2+). The catalytic subdomain B stretch occupies residues 304 to 366 (VIRSPTMAGG…PCSHVGHVFP (63 aa)). Residue tryptophan 335 participates in substrate binding. Histidine 363 provides a ligand contact to Mn(2+). Tyrosine 371 lines the substrate pocket. The Ricin B-type lectin domain occupies 445–577 (FFGMLQNKGL…NSDHQKWFFK (133 aa)).

It belongs to the glycosyltransferase 2 family. GalNAc-T subfamily. Mn(2+) is required as a cofactor. In terms of tissue distribution, widely expressed at different levels of expression. Highly expressed in digestive organs such as small intestine, stomach, pancreas and colon. Expressed at intermediate level in testis, thyroid gland and spleen. Weakly expressed in whole brain, cerebral cortex, cerebellum, fetal brain, bone marrow, thymus, leukocytes, heart, skeletal muscle, liver, lung, esophagus, kidney, adrenal gland, mammary gland, uterus, placenta, ovary and prostate.

Its subcellular location is the golgi apparatus membrane. The catalysed reaction is L-seryl-[protein] + UDP-N-acetyl-alpha-D-galactosamine = a 3-O-[N-acetyl-alpha-D-galactosaminyl]-L-seryl-[protein] + UDP + H(+). It carries out the reaction L-threonyl-[protein] + UDP-N-acetyl-alpha-D-galactosamine = a 3-O-[N-acetyl-alpha-D-galactosaminyl]-L-threonyl-[protein] + UDP + H(+). The protein operates within protein modification; protein glycosylation. Its function is as follows. Catalyzes the initial reaction in O-linked oligosaccharide biosynthesis, the transfer of an N-acetyl-D-galactosamine residue to a serine or threonine residue on the protein receptor. Has activity toward non-glycosylated peptides such as Muc5AC, Muc1a and EA2, and no detectable activity with Muc2 and Muc7. Displays enzymatic activity toward the Gal-NAc-Muc5AC glycopeptide, but no detectable activity to mono-GalNAc-glycosylated Muc1a, Muc2, Muc7 and EA2. May play an important role in the initial step of mucin-type oligosaccharide biosynthesis in digestive organs. The protein is Polypeptide N-acetylgalactosaminyltransferase 12 (GALNT12) of Homo sapiens (Human).